We begin with the raw amino-acid sequence, 24 residues long: Coenzyme PQQ synthesis protein A (24 aa).

The segment at residues 16 to 20 (EITMY) is a cross-link (pyrroloquinoline quinone (Glu-Tyr)).

It belongs to the PqqA family.

It participates in cofactor biosynthesis; pyrroloquinoline quinone biosynthesis. Its function is as follows. Required for coenzyme pyrroloquinoline quinone (PQQ) biosynthesis. PQQ is probably formed by cross-linking a specific glutamate to a specific tyrosine residue and excising these residues from the peptide. The sequence is that of Coenzyme PQQ synthesis protein A from Cupriavidus taiwanensis (strain DSM 17343 / BCRC 17206 / CCUG 44338 / CIP 107171 / LMG 19424 / R1) (Ralstonia taiwanensis (strain LMG 19424)).